A 393-amino-acid chain; its full sequence is Chalcone synthase DIII (393 aa).

The active site involves Cys164.

It belongs to the thiolase-like superfamily. Chalcone/stilbene synthases family.

It catalyses the reaction (E)-4-coumaroyl-CoA + 3 malonyl-CoA + 3 H(+) = 2',4,4',6'-tetrahydroxychalcone + 3 CO2 + 4 CoA. It functions in the pathway secondary metabolite biosynthesis; flavonoid biosynthesis. Functionally, the primary product of this enzyme is 4,2',4',6'-tetrahydroxychalcone (also termed naringenin-chalcone or chalcone) which can under specific conditions spontaneously isomerize into naringenin. In Ipomoea batatas (Sweet potato), this protein is Chalcone synthase DIII (CHS-DIII).